The chain runs to 1214 residues: Sodium bicarbonate cotransporter 3 (1214 aa).

Residues methionine 1 to glycine 12 show a composition bias toward basic and acidic residues. Disordered stretches follow at residues methionine 1–glycine 22 and serine 52–arginine 93. At methionine 1–cysteine 608 the chain is on the extracellular side. Phosphoserine occurs at positions 52, 55, 84, 150, 165, and 168. A compositionally biased stretch (basic residues) spans serine 55–lysine 72. The span at aspartate 73–proline 85 shows a compositional bias: basic and acidic residues. Residue asparagine 171 is glycosylated (N-linked (GlcNAc...) asparagine). Serine 233, serine 242, serine 255, arginine 258, serine 260, threonine 263, glycine 264, and alanine 267 each carry phosphoserine. A glycan (N-linked (GlcNAc...) asparagine) is linked at asparagine 269. Disordered regions lie at residues serine 289–valine 346, glutamate 362–threonine 408, and phenylalanine 552–glycine 572. Positions valine 303–serine 313 are enriched in pro residues. Positions proline 314–proline 332 are enriched in low complexity. Positions serine 379 to serine 392 are enriched in polar residues. Position 382 is a phosphoserine (serine 382). An N-linked (GlcNAc...) asparagine glycan is attached at asparagine 398. Residues serine 400 and serine 403 each carry the phosphoserine modification. N-linked (GlcNAc...) asparagine glycosylation is present at asparagine 406. A phosphoserine mark is found at serine 407 and serine 556. Threonine 557 is subject to Phosphothreonine. The span at threonine 563–glycine 572 shows a compositional bias: basic and acidic residues. Residues leucine 609–leucine 629 form a helical membrane-spanning segment. Over leucine 630–arginine 637 the chain is Cytoplasmic. Residues isoleucine 638–alanine 658 traverse the membrane as a helical segment. The Extracellular portion of the chain corresponds to glycine 659–serine 695. The chain crosses the membrane as a helical span at residues isoleucine 696–valine 716. Residues cysteine 717 to glutamate 725 lie on the Cytoplasmic side of the membrane. Residues alanine 726 to leucine 746 form a helical membrane-spanning segment. Lysine 742 is modified (phosphoserine). Over glycine 747–histidine 817 the chain is Extracellular. Cysteine 766 and cysteine 768 are oxidised to a cystine. A phosphoserine mark is found at proline 771 and proline 774. N-linked (GlcNAc...) asparagine glycosylation occurs at asparagine 776. Alanine 780 is modified (phosphoserine). Residues asparagine 786 and asparagine 791 are each glycosylated (N-linked (GlcNAc...) asparagine). A disulfide bond links cysteine 802 and cysteine 814. The helical transmembrane segment at glycine 818–leucine 838 threads the bilayer. The Cytoplasmic portion of the chain corresponds to serine 839 to aspartate 861. Residues phenylalanine 862–serine 882 traverse the membrane as a helical segment. Topologically, residues proline 883–asparagine 908 are extracellular. Residues proline 909–methionine 929 traverse the membrane as a helical segment. Topologically, residues aspartate 930–aspartate 954 are cytoplasmic. Residues leucine 955–alanine 975 form a helical membrane-spanning segment. Topologically, residues alanine 976–threonine 1011 are extracellular. A phosphoserine mark is found at glutamate 1007, valine 1010, and phenylalanine 1016. 2 essential for cell membrane localization and transport activity regions span residues glutamine 1008–leucine 1131 and threonine 1127–leucine 1214. A helical transmembrane segment spans residues glycine 1012–isoleucine 1032. The Cytoplasmic portion of the chain corresponds to proline 1033–methionine 1034. A helical membrane pass occupies residues proline 1035–phenylalanine 1055. The Extracellular portion of the chain corresponds to aspartate 1056–cysteine 1092. Residues tyrosine 1073, valine 1077, serine 1102, alanine 1105, valine 1106, proline 1109, methionine 1111, and leucine 1115 each carry the phosphoserine modification. A helical membrane pass occupies residues leucine 1093–leucine 1113. The Cytoplasmic segment spans residues alanine 1114–leucine 1214. The CA2-binding stretch occupies residues leucine 1134–aspartate 1136. A compositionally biased stretch (basic and acidic residues) spans lysine 1144–glutamine 1162. The tract at residues lysine 1144 to histidine 1169 is disordered. Threonine 1167 bears the Phosphothreonine mark. Phosphoserine occurs at positions 1176, 1188, 1201, and 1213. The PDZ-binding motif lies at glutamate 1211–leucine 1214.

It belongs to the anion exchanger (TC 2.A.31) family. As to quaternary structure, interacts with CFTR through NHERF1/EBP50. Interacts with USH1C. Forms a complex with ATP6V1B1 and NHERF1/EBP50. Interacts in a pH dependent-manner with CA2/carbonic anhydrase 2. In terms of tissue distribution, highly expressed in testis and spleen. Also expressed in retina, colon, small intestine, ovary, thymus, prostate, muscle, heart and kidney. As to expression, expressed in skeletal muscle and heart muscle.

Its subcellular location is the basolateral cell membrane. It localises to the apical cell membrane. The protein localises to the cell projection. The protein resides in the stereocilium. It is found in the cell membrane. It carries out the reaction hydrogencarbonate(in) + Na(+)(in) = hydrogencarbonate(out) + Na(+)(out). With respect to regulation, transporter activity is regulated by CA2/carbonic anhydrase 2, cAMP and PKA. Insensitive to stilbene derivatives. Inhibited by 5-(N-ethyl-N-isopropyl)-amiloride (EIPA). Electroneutral sodium- and bicarbonate-dependent cotransporter with a Na(+):HCO3(-) 1:1 stoichiometry. Mediates the sodium-dependent bicarbonate transport important for pH recovery after acid load as well as for regulation of steady-state pH in the duodenum and vascular smooth muscle cells. Plays a key role in macrophage acidification, mediating bicarbonate import into the cytoplasm which is crucial for net acid extrusion and maintenance of cytoplasmic pH during phagocytosis. Provides cellular bicarbonate for de novo purine and pyrimidine synthesis and is a key mediator of de novo nucleotide synthesis downstream of mTORC1 signaling in proliferating cells. Its function is as follows. Plays a key role in macrophage acidification, mediating bicarbonate import into the cytoplasm which is crucial for net acid extrusion and maintenance of cytoplasmic pH during phagocytosis. This is Sodium bicarbonate cotransporter 3 (SLC4A7) from Homo sapiens (Human).